A 533-amino-acid polypeptide reads, in one-letter code: E3 ubiquitin-protein ligase MGRN1 (533 aa).

A lipid anchor (N-myristoyl glycine) is attached at glycine 2. The RING-type zinc finger occupies 278–317 (ECVVCLSDLRDTLILPCRHLCLCTSCADTLRYQANNCPIC). Residues 385-388 (PSAP) carry the Required for TSG101-binding motif. Tyrosine 390 is modified (phosphotyrosine). Residues 421–519 (QKGKTQSKSP…QPVPPADIYL (99 aa)) are disordered. Over residues 423–439 (GKTQSKSPDSTLRSPSS) the composition is skewed to polar residues. Residues serine 429, serine 450, and serine 502 each carry the phosphoserine modification. Residues 443–454 (EEDEEKLSEDPE) are compositionally biased toward acidic residues.

In terms of assembly, interacts with MC1R and MC4R. Interacts with TSG101. Interacts with mislocalized cytosolically exposed PRNP; this interaction alters MGRN1 subcellular location and causes lysosomal enlargement. Post-translationally, autoubiquitinated in vitro.

The protein localises to the cytoplasm. The protein resides in the cytosol. It localises to the cell membrane. Its subcellular location is the early endosome. The catalysed reaction is S-ubiquitinyl-[E2 ubiquitin-conjugating enzyme]-L-cysteine + [acceptor protein]-L-lysine = [E2 ubiquitin-conjugating enzyme]-L-cysteine + N(6)-ubiquitinyl-[acceptor protein]-L-lysine.. The protein operates within protein modification; protein ubiquitination. Functionally, E3 ubiquitin-protein ligase. Mediates TSG101 monoubiquitination at multiple sites. Plays a role in the regulation of endosome-to-lysosome trafficking. Impairs MC1R- and MC4R-signaling by competing with GNAS-binding to MCRs and inhibiting agonist-induced cAMP production. Does not inhibit ADRB2-signaling. Does not promote MC1R ubiquitination. Also acts as a negative regulator of hedgehog signaling. The polypeptide is E3 ubiquitin-protein ligase MGRN1 (Mgrn1) (Rattus norvegicus (Rat)).